Consider the following 203-residue polypeptide: Small ribosomal subunit protein uS4 (203 aa).

In terms of domain architecture, S4 RNA-binding spans 93-156 (RRLDNVVYRL…MKVPAILEAV (64 aa)).

Belongs to the universal ribosomal protein uS4 family. In terms of assembly, part of the 30S ribosomal subunit. Contacts protein S5. The interaction surface between S4 and S5 is involved in control of translational fidelity.

In terms of biological role, one of the primary rRNA binding proteins, it binds directly to 16S rRNA where it nucleates assembly of the body of the 30S subunit. Functionally, with S5 and S12 plays an important role in translational accuracy. The protein is Small ribosomal subunit protein uS4 of Streptococcus pyogenes serotype M1.